The primary structure comprises 284 residues: Ermin (284 aa).

Positions 1–23 (MTDVPATFTQAECNGDKPPENGQ) are disordered. A Phosphoserine modification is found at S73. Positions 110–251 (REGHQWEKIP…PTLGKKSDIS (142 aa)) are disordered. 2 stretches are compositionally biased toward basic and acidic residues: residues 126–140 (EIRR…QPLK) and 171–183 (LHSK…KVWD). Acidic residues predominate over residues 184 to 200 (EEIDDDDDDNCNNDEDE). A compositionally biased stretch (basic and acidic residues) spans 201–220 (VRVIEFKKKHEEVSQFKEEG). Phosphoserine occurs at positions 214, 226, 230, and 233. A compositionally biased stretch (low complexity) spans 225–235 (DSPLSSASSQA). Residue T237 is modified to Phosphothreonine. Residues 265–284 (KIRKGNTKQRIDEFESMMHL) form a binds actin region.

In terms of assembly, binds actin. Highly expressed in adult and fetal brain. Expressed at intermediate levels in the lung and liver.

The protein localises to the cytoplasm. It is found in the cytoskeleton. Plays a role in cytoskeletal rearrangements during the late wrapping and/or compaction phases of myelinogenesis as well as in maintenance and stability of myelin sheath in the adult. May play an important role in late-stage oligodendroglia maturation, myelin/Ranvier node formation during CNS development, and in the maintenance and plasticity of related structures in the mature CNS. In Homo sapiens (Human), this protein is Ermin (ERMN).